The primary structure comprises 257 residues: Receptor expression-enhancing protein 4 (257 aa).

Helical transmembrane passes span 1–21 and 42–62; these read MVSWMICRLVVLVFGMLCPAY and WIVFALFMAAEIVTDIFISWF. Residues S152 and S194 each carry the phosphoserine modification. Positions 183–257 are disordered; it reads PIGYRAGGLQ…KKTVPSDVDS (75 aa). T196 bears the Phosphothreonine mark. Residue S202 is modified to Phosphoserine. Residue T250 is modified to Phosphothreonine. Phosphoserine is present on S253.

The protein belongs to the DP1 family. As to expression, expressed in circumvallate papillae and testis.

The protein resides in the endoplasmic reticulum membrane. In terms of biological role, microtubule-binding protein required to ensure proper cell division and nuclear envelope reassembly by sequestering the endoplasmic reticulum away from chromosomes during mitosis. Probably acts by clearing the endoplasmic reticulum membrane from metaphase chromosomes. The sequence is that of Receptor expression-enhancing protein 4 (REEP4) from Homo sapiens (Human).